The sequence spans 399 residues: Formaldehyde dismutase (399 aa).

C46 contributes to the Zn(2+) binding site. 47 to 51 (GSDQH) contributes to the NAD(+) binding site. Zn(2+) contacts are provided by H67, C97, C100, C103, C111, and D170. Residue T174 coordinates NAD(+). Zn(2+) is bound at residue H177. Residues 197–198 (PV), 218–219 (DQ), R223, V263, H268, P299, 299–301 (PGI), and 336–338 (GMA) each bind NAD(+).

It belongs to the zinc-containing alcohol dehydrogenase family. Homotetramer. Zn(2+) serves as cofactor. Requires NAD(+) as cofactor. It depends on NADH as a cofactor.

The enzyme catalyses 2 formaldehyde + H2O = methanol + formate + H(+). Inhibited by the substrate analog pyrazole but not by NAD analogs such as AMP, ADP, ATP or N-methylnicotinamide chloride. In terms of biological role, active against a range of primary alcohols as well as some secondary alcohols. Exhibits higher activity against alcohols with longer carbon chains. The chain is Formaldehyde dismutase from Pseudomonas putida (Arthrobacter siderocapsulatus).